The primary structure comprises 98 residues: Small ribosomal subunit protein uS19 (98 aa).

The interval 77–98 (TRTFRGHAGGKAEKGGSAPKRK) is disordered.

The protein belongs to the universal ribosomal protein uS19 family.

In terms of biological role, protein S19 forms a complex with S13 that binds strongly to the 16S ribosomal RNA. The chain is Small ribosomal subunit protein uS19 from Chlorobium luteolum (strain DSM 273 / BCRC 81028 / 2530) (Pelodictyon luteolum).